Consider the following 393-residue polypeptide: NAD(P)H-quinone oxidoreductase subunit H, chloroplastic (393 aa).

It belongs to the complex I 49 kDa subunit family. As to quaternary structure, NDH is composed of at least 16 different subunits, 5 of which are encoded in the nucleus.

The protein localises to the plastid. It is found in the chloroplast thylakoid membrane. The enzyme catalyses a plastoquinone + NADH + (n+1) H(+)(in) = a plastoquinol + NAD(+) + n H(+)(out). It catalyses the reaction a plastoquinone + NADPH + (n+1) H(+)(in) = a plastoquinol + NADP(+) + n H(+)(out). In terms of biological role, NDH shuttles electrons from NAD(P)H:plastoquinone, via FMN and iron-sulfur (Fe-S) centers, to quinones in the photosynthetic chain and possibly in a chloroplast respiratory chain. The immediate electron acceptor for the enzyme in this species is believed to be plastoquinone. Couples the redox reaction to proton translocation, and thus conserves the redox energy in a proton gradient. This chain is NAD(P)H-quinone oxidoreductase subunit H, chloroplastic, found in Manihot esculenta (Cassava).